A 134-amino-acid polypeptide reads, in one-letter code: D-ribose pyranase (134 aa).

Catalysis depends on H20, which acts as the Proton donor. Substrate contacts are provided by residues D28, H101, and 123 to 125 (YSN).

The protein belongs to the RbsD / FucU family. RbsD subfamily. In terms of assembly, homodecamer.

It is found in the cytoplasm. The enzyme catalyses beta-D-ribopyranose = beta-D-ribofuranose. It functions in the pathway carbohydrate metabolism; D-ribose degradation; D-ribose 5-phosphate from beta-D-ribopyranose: step 1/2. In terms of biological role, catalyzes the interconversion of beta-pyran and beta-furan forms of D-ribose. This chain is D-ribose pyranase, found in Pseudomonas entomophila (strain L48).